The chain runs to 2620 residues: Ubiquitin carboxyl-terminal hydrolase 24 (2620 aa).

A UBA domain is found at 3–44; sequence SEEEQHMTTLLCMGFSDPATIRKALRLAKNDINEAVALLTNE. Positions 45–102 are disordered; it reads RPGLDYGGYEPMDSGGGPSPGPGGGPRGDGGGDGGGGGPSRGGSTGGGGGFDPPPAYH. A compositionally biased stretch (gly residues) spans 58 to 95; it reads SGGGPSPGPGGGPRGDGGGDGGGGGPSRGGSTGGGGGF. A phosphoserine mark is found at serine 63 and serine 88. Residue tyrosine 942 is modified to Phosphotyrosine. 2 disordered regions span residues 1034-1054 and 1129-1151; these read TSGS…SSSS and TLLS…QQHQ. Over residues 1131 to 1151 the composition is skewed to low complexity; sequence LSESSSQSSKSPSLSSKQQHQ. A phosphoserine mark is found at serine 1141 and serine 1285. Residues 1689 to 2042 enclose the USP domain; sequence VGLRNGGATC…NAYMLFYQRV (354 aa). Catalysis depends on cysteine 1698, which acts as the Nucleophile. Residues 1921-1945 form a disordered region; that stretch reads ARQDSSSEVGENGRSVDQGGGGSPR. Serine 1943 is subject to Phosphoserine. The active-site Proton acceptor is histidine 1970. A phosphoserine mark is found at serine 2047, serine 2077, and serine 2561. The tract at residues 2063–2090 is disordered; it reads AEDLSLSAPSSPEISPQSSPRPHRPNND. Positions 2069-2082 are enriched in low complexity; it reads SAPSSPEISPQSSP. Threonine 2565 carries the post-translational modification Phosphothreonine. A disordered region spans residues 2575 to 2620; the sequence is EKEQSGSSNGSESSPANENGDRHLQQGSESPMMIGELRSDLDDVDP. Low complexity predominate over residues 2579 to 2592; the sequence is SGSSNGSESSPANE. Position 2604 is a phosphoserine (serine 2604). Positions 2611-2620 are enriched in basic and acidic residues; sequence LRSDLDDVDP.

This sequence belongs to the peptidase C19 family. As to quaternary structure, (Microbial infection) Interacts with human cytomegalovirus protein UL38.

The catalysed reaction is Thiol-dependent hydrolysis of ester, thioester, amide, peptide and isopeptide bonds formed by the C-terminal Gly of ubiquitin (a 76-residue protein attached to proteins as an intracellular targeting signal).. Functionally, ubiquitin-specific protease that regulates cell survival in various contexts through modulating the protein stability of some of its substrates including DDB2, MCL1 or TP53. Plays a positive role on ferritinophagy where ferritin is degraded in lysosomes and releases free iron. This chain is Ubiquitin carboxyl-terminal hydrolase 24 (USP24), found in Homo sapiens (Human).